The chain runs to 261 residues: Indole-3-glycerol phosphate synthase (261 aa).

It belongs to the TrpC family.

The catalysed reaction is 1-(2-carboxyphenylamino)-1-deoxy-D-ribulose 5-phosphate + H(+) = (1S,2R)-1-C-(indol-3-yl)glycerol 3-phosphate + CO2 + H2O. It participates in amino-acid biosynthesis; L-tryptophan biosynthesis; L-tryptophan from chorismate: step 4/5. The polypeptide is Indole-3-glycerol phosphate synthase (Campylobacter hominis (strain ATCC BAA-381 / DSM 21671 / CCUG 45161 / LMG 19568 / NCTC 13146 / CH001A)).